We begin with the raw amino-acid sequence, 280 residues long: UDP-3-O-acyl-N-acetylglucosamine deacetylase (280 aa).

Zn(2+) contacts are provided by H79, H237, and D241. H264 (proton donor) is an active-site residue.

The protein belongs to the LpxC family. Zn(2+) serves as cofactor.

It carries out the reaction a UDP-3-O-[(3R)-3-hydroxyacyl]-N-acetyl-alpha-D-glucosamine + H2O = a UDP-3-O-[(3R)-3-hydroxyacyl]-alpha-D-glucosamine + acetate. The protein operates within glycolipid biosynthesis; lipid IV(A) biosynthesis; lipid IV(A) from (3R)-3-hydroxytetradecanoyl-[acyl-carrier-protein] and UDP-N-acetyl-alpha-D-glucosamine: step 2/6. Functionally, catalyzes the hydrolysis of UDP-3-O-myristoyl-N-acetylglucosamine to form UDP-3-O-myristoylglucosamine and acetate, the committed step in lipid A biosynthesis. In Chlamydia caviae (strain ATCC VR-813 / DSM 19441 / 03DC25 / GPIC) (Chlamydophila caviae), this protein is UDP-3-O-acyl-N-acetylglucosamine deacetylase.